The following is an 838-amino-acid chain: Glycogen phosphorylase, brain form (838 aa).

N-acetylalanine is present on Ala-2. The residue at position 15 (Ser-15) is a Phosphoserine. 3 residues coordinate AMP: Asp-43, Tyr-197, and Arg-310. Tyr-197 carries the phosphotyrosine modification. Position 473 is a phosphotyrosine (Tyr-473). Ser-524 bears the Phosphoserine mark. Lys-569 provides a ligand contact to pyridoxal 5'-phosphate. The segment at 677-678 (TG) is pyridoxal 5'-phosphate. Residue Lys-681 is modified to N6-(pyridoxal phosphate)lysine.

It belongs to the glycogen phosphorylase family. Homodimer. Dimers associate into a tetramer to form the enzymatically active phosphorylase A. Requires pyridoxal 5'-phosphate as cofactor. Post-translationally, phosphorylation of Ser-15 converts phosphorylase B (unphosphorylated) to phosphorylase A.

It carries out the reaction [(1-&gt;4)-alpha-D-glucosyl](n) + phosphate = [(1-&gt;4)-alpha-D-glucosyl](n-1) + alpha-D-glucose 1-phosphate. Activity of phosphorylase is controlled both by allosteric means (through the non-covalent binding of metabolites) and by covalent modification. Thus AMP allosterically activates, whereas ATP, ADP, and glucose-6-phosphate allosterically inhibit, phosphorylase B. Glycogen phosphorylase that regulates glycogen mobilization. Phosphorylase is an important allosteric enzyme in carbohydrate metabolism. Enzymes from different sources differ in their regulatory mechanisms and in their natural substrates. However, all known phosphorylases share catalytic and structural properties. The polypeptide is Glycogen phosphorylase, brain form (Pygb) (Rattus norvegicus (Rat)).